The chain runs to 145 residues: Basic phospholipase A2 S6-45 (145 aa).

The N-terminal stretch at 1–19 is a signal peptide; it reads MYPAHLLVLLAVCVSLLGA. A propeptide spanning residues 20–27 is cleaved from the precursor; that stretch reads SDIPPQPL. 7 disulfides stabilise this stretch: cysteine 38-cysteine 99, cysteine 54-cysteine 144, cysteine 56-cysteine 72, cysteine 71-cysteine 127, cysteine 78-cysteine 120, cysteine 88-cysteine 113, and cysteine 106-cysteine 118. Positions 55, 57, and 59 each coordinate Ca(2+). The active site involves histidine 75. Aspartate 76 serves as a coordination point for Ca(2+). Residue aspartate 121 is part of the active site.

The protein belongs to the phospholipase A2 family. Group I subfamily. D49 sub-subfamily. It depends on Ca(2+) as a cofactor. Expressed by the venom gland.

The protein localises to the secreted. The enzyme catalyses a 1,2-diacyl-sn-glycero-3-phosphocholine + H2O = a 1-acyl-sn-glycero-3-phosphocholine + a fatty acid + H(+). In terms of biological role, snake venom phospholipase A2 (PLA2) that inhibits collagen-induced platelet aggregation. PLA2 catalyzes the calcium-dependent hydrolysis of the 2-acyl groups in 3-sn-phosphoglycerides. The protein is Basic phospholipase A2 S6-45 of Austrelaps superbus (Lowland copperhead snake).